We begin with the raw amino-acid sequence, 333 residues long: NADH-quinone oxidoreductase subunit H (333 aa).

Transmembrane regions (helical) follow at residues 8–28 (VLAAALIALAFVAVNAAYLVW), 75–95 (ILFMVAPVLAMFPALMSFVTI), 108–128 (IGLLVILAFASFAGLAILLAG), 154–174 (MLITAITVVLVSGSVDFIEIV), 191–211 (PGLFNIFMPISFLIFFICSLA), 251–271 (IVIGACLTTLLFLGGWDCPFG), 273–293 (FPGVWWFLIKIYILIFTFIWI), and 312–332 (ILIPLSLINLLLTAGFIKVFA).

Belongs to the complex I subunit 1 family. As to quaternary structure, NDH-1 is composed of 14 different subunits. Subunits NuoA, H, J, K, L, M, N constitute the membrane sector of the complex.

The protein resides in the cell inner membrane. It carries out the reaction a quinone + NADH + 5 H(+)(in) = a quinol + NAD(+) + 4 H(+)(out). Its function is as follows. NDH-1 shuttles electrons from NADH, via FMN and iron-sulfur (Fe-S) centers, to quinones in the respiratory chain. The immediate electron acceptor for the enzyme in this species is believed to be ubiquinone. Couples the redox reaction to proton translocation (for every two electrons transferred, four hydrogen ions are translocated across the cytoplasmic membrane), and thus conserves the redox energy in a proton gradient. This subunit may bind ubiquinone. The sequence is that of NADH-quinone oxidoreductase subunit H from Desulfotalea psychrophila (strain LSv54 / DSM 12343).